The sequence spans 475 residues: Bifunctional protein HldE (475 aa).

A ribokinase region spans residues 1-321 (MADKIDISLY…RALHQITASH (321 aa)). 197–200 (NLKE) is an ATP binding site. Asp-266 is an active-site residue. The tract at residues 346-475 (MTNGCFDILH…TSRLVEKMLN (130 aa)) is cytidylyltransferase.

This sequence in the N-terminal section; belongs to the carbohydrate kinase PfkB family. It in the C-terminal section; belongs to the cytidylyltransferase family. Homodimer.

It catalyses the reaction D-glycero-beta-D-manno-heptose 7-phosphate + ATP = D-glycero-beta-D-manno-heptose 1,7-bisphosphate + ADP + H(+). The catalysed reaction is D-glycero-beta-D-manno-heptose 1-phosphate + ATP + H(+) = ADP-D-glycero-beta-D-manno-heptose + diphosphate. It functions in the pathway nucleotide-sugar biosynthesis; ADP-L-glycero-beta-D-manno-heptose biosynthesis; ADP-L-glycero-beta-D-manno-heptose from D-glycero-beta-D-manno-heptose 7-phosphate: step 1/4. Its pathway is nucleotide-sugar biosynthesis; ADP-L-glycero-beta-D-manno-heptose biosynthesis; ADP-L-glycero-beta-D-manno-heptose from D-glycero-beta-D-manno-heptose 7-phosphate: step 3/4. Its function is as follows. Catalyzes the phosphorylation of D-glycero-D-manno-heptose 7-phosphate at the C-1 position to selectively form D-glycero-beta-D-manno-heptose-1,7-bisphosphate. In terms of biological role, catalyzes the ADP transfer from ATP to D-glycero-beta-D-manno-heptose 1-phosphate, yielding ADP-D-glycero-beta-D-manno-heptose. The sequence is that of Bifunctional protein HldE from Coxiella burnetii (strain Dugway 5J108-111).